The sequence spans 498 residues: Protein disulfide-isomerase (498 aa).

An N-terminal signal peptide occupies residues 1–23 (MASFRGSIWYCIFVLSLIAVAIS). Thioredoxin domains are found at residues 24-143 (AAES…KQSG) and 339-484 (YLKA…KNRD). An N-linked (GlcNAc...) asparagine glycan is attached at Asn-41. Residues Cys-61, Cys-64, Cys-406, and Cys-409 each act as nucleophile in the active site. Intrachain disulfides connect Cys-61–Cys-64 and Cys-406–Cys-409. Residues 495–498 (KDEL) carry the Prevents secretion from ER motif.

This sequence belongs to the protein disulfide isomerase family.

The protein resides in the endoplasmic reticulum lumen. It catalyses the reaction Catalyzes the rearrangement of -S-S- bonds in proteins.. Participates in the folding of proteins containing disulfide bonds, may be involved in glycosylation, prolyl hydroxylation and triglyceride transfer. The sequence is that of Protein disulfide-isomerase from Ricinus communis (Castor bean).